The sequence spans 160 residues: MTKKKAHKPGSATIALNKRARHEYFIEDEYEAGLALQGWEVKSLRAGKANIGDSYVILKDGEAFLFGANFTPMAVASTHYVCDPTRTRKLLLNQRELDTLYGRINREGYTVVALSLYWKNAWCKVKIGVAKGKKQHDKRTDLKDREWALDKARIMKHAGR.

This sequence belongs to the SmpB family.

It is found in the cytoplasm. In terms of biological role, required for rescue of stalled ribosomes mediated by trans-translation. Binds to transfer-messenger RNA (tmRNA), required for stable association of tmRNA with ribosomes. tmRNA and SmpB together mimic tRNA shape, replacing the anticodon stem-loop with SmpB. tmRNA is encoded by the ssrA gene; the 2 termini fold to resemble tRNA(Ala) and it encodes a 'tag peptide', a short internal open reading frame. During trans-translation Ala-aminoacylated tmRNA acts like a tRNA, entering the A-site of stalled ribosomes, displacing the stalled mRNA. The ribosome then switches to translate the ORF on the tmRNA; the nascent peptide is terminated with the 'tag peptide' encoded by the tmRNA and targeted for degradation. The ribosome is freed to recommence translation, which seems to be the essential function of trans-translation. The protein is SsrA-binding protein of Klebsiella pneumoniae (strain 342).